The primary structure comprises 247 residues: Particulate methane monooxygenase beta subunit (247 aa).

The next 6 helical transmembrane spans lie at 23–43, 59–79, 86–106, 111–131, 145–165, and 215–235; these read WMALFVVFFVIVGSYHIHAML, LWVTVTPIVLVTFPAAVQSYL, PWGATVCVLGLLLGEWINRYF, WTYFPINFVFPASLVPGAIIL, AIVGAMGWGLIFYPGNWPIIA, and VSAFFSAFMSILIYFMWHFIG.

M.capsulatus has two forms of methane monooxygenase, a soluble (sMMO) and a membrane-bound (particulate) type (pMMO). The particulate type is a nonamer composed of three alpha:beta:gamma heterotrimeric protomers assembled into a cylindrical structure; the beta and gamma subunits comprise the bulk of the membrane-spanning regions and the soluble regions are derived primarily from alpha subunits which form two antiparallel beta-barrel-like structures each. This assembly, also called pMMO hydroxylase (pMMO-H), is proposed to associate with methanol dehydrogenase (MDH), also designated as pMMO-R, to form the pMMO-C complex which seems to have greater methane monooxygenase activity.

The protein localises to the membrane. It catalyses the reaction methane + a quinol + O2 = methanol + a quinone + H2O. Functionally, non-catalytic subunit of the methane monooxygenase that is responsible for the initial oxygenation of methane to methanol in methanotrophs. At least in vitro, specific quinols can replace NADH as reductants. The polypeptide is Particulate methane monooxygenase beta subunit (pmoA1) (Methylococcus capsulatus (strain ATCC 33009 / NCIMB 11132 / Bath)).